The sequence spans 369 residues: MQTNNPSYFFRSESALQDEKRKEEKSHNPNGNPRNLKAKILNIELDRTTPKKKQFPRLFVCEASHICKLYDLEINKTCKTYKGHSGPVTCCQIESLRKDGKVRHIYTGSWDHTIKKWNVSTGECVETLIGHTDYVKCLLLLEEEGLLLSGSTDASLIVWDVSSQPSRLLYKLTGHSRGIECITRQPNTDIFWTCGSESSIRCWHITKVGGSQLEEEGFWGHQSNVYCLLFDPQDSEALWTASADKTVREWSLYQGIHEETRMEHPDVCTDVLTLADGNIATACRDEEIRVWDTTTGNVKDIYSGHYESVTKILQWKSYLISSSLDQTIRVWDLEYSADNNEADDHPSLGPPSTKLTAEELAELEELMND.

The disordered stretch occupies residues 1-35 (MQTNNPSYFFRSESALQDEKRKEEKSHNPNGNPRN). The segment covering 17 to 27 (QDEKRKEEKSH) has biased composition (basic and acidic residues). WD repeat units lie at residues 83–127 (GHSG…CVET), 130–169 (GHTD…SRLL), 174–213 (GHSR…GSQL), 220–260 (GHQS…HEET), 263–301 (EHPD…VKDI), and 304–341 (GHYE…DNNE).

This is an uncharacterized protein from Schizosaccharomyces pombe (strain 972 / ATCC 24843) (Fission yeast).